The chain runs to 211 residues: Uridine kinase (211 aa).

13 to 20 (GASASGKS) contacts ATP.

Belongs to the uridine kinase family.

It is found in the cytoplasm. It carries out the reaction uridine + ATP = UMP + ADP + H(+). The catalysed reaction is cytidine + ATP = CMP + ADP + H(+). It functions in the pathway pyrimidine metabolism; CTP biosynthesis via salvage pathway; CTP from cytidine: step 1/3. Its pathway is pyrimidine metabolism; UMP biosynthesis via salvage pathway; UMP from uridine: step 1/1. The protein is Uridine kinase of Shewanella pealeana (strain ATCC 700345 / ANG-SQ1).